A 293-amino-acid chain; its full sequence is DNA-directed RNA polymerase III subunit RPC6 (293 aa).

The protein belongs to the eukaryotic RPC34/RPC39 RNA polymerase subunit family. In terms of assembly, component of the RNA polymerase III (Pol III) complex consisting of 17 subunits.

It localises to the nucleus. Its function is as follows. DNA-dependent RNA polymerase catalyzes the transcription of DNA into RNA using the four ribonucleoside triphosphates as substrates. Specific peripheric component of RNA polymerase III which synthesizes small RNAs, such as 5S rRNA and tRNAs. This chain is DNA-directed RNA polymerase III subunit RPC6, found in Drosophila melanogaster (Fruit fly).